A 109-amino-acid chain; its full sequence is METKAILRGVRLSAQKGRLVADLVRGKSVDQALNILAFSPKKGAKIIRKVVESAIANAEHNDGADIDALKVKTIYVEEGTTLKRFTARAKGRGNRILKPTCHVFVTVGE.

This sequence belongs to the universal ribosomal protein uL22 family. In terms of assembly, part of the 50S ribosomal subunit.

Its function is as follows. This protein binds specifically to 23S rRNA; its binding is stimulated by other ribosomal proteins, e.g. L4, L17, and L20. It is important during the early stages of 50S assembly. It makes multiple contacts with different domains of the 23S rRNA in the assembled 50S subunit and ribosome. Functionally, the globular domain of the protein is located near the polypeptide exit tunnel on the outside of the subunit, while an extended beta-hairpin is found that lines the wall of the exit tunnel in the center of the 70S ribosome. The polypeptide is Large ribosomal subunit protein uL22 (Azoarcus sp. (strain BH72)).